The sequence spans 242 residues: UPF0246 protein SP_1547 (242 aa).

Belongs to the UPF0246 family.

The polypeptide is UPF0246 protein SP_1547 (Streptococcus pneumoniae serotype 4 (strain ATCC BAA-334 / TIGR4)).